Consider the following 247-residue polypeptide: Mitochondrial inner membrane protease ATP23 (247 aa).

The disordered stretch occupies residues 1–21 (MSVPPPPKEDLIKPNPPKSES). Histidine 144 is a binding site for a divalent metal cation. Residue glutamate 145 is part of the active site. Histidine 148 is a binding site for a divalent metal cation.

The protein belongs to the peptidase M76 family.

The protein localises to the mitochondrion inner membrane. Functionally, has a dual role in the assembly of mitochondrial ATPase. Acts as a protease that removes N-terminal residues of mitochondrial ATPase CF(0) subunit 6 at the intermembrane space side. Also involved in the correct assembly of the membrane-embedded ATPase CF(0) particle, probably mediating association of subunit 6 with the subunit 9 ring. The sequence is that of Mitochondrial inner membrane protease ATP23 (ATP23) from Kluyveromyces lactis (strain ATCC 8585 / CBS 2359 / DSM 70799 / NBRC 1267 / NRRL Y-1140 / WM37) (Yeast).